We begin with the raw amino-acid sequence, 703 residues long: ABC transporter G family member 11 (703 aa).

The region spanning 50–293 is the ABC transporter domain; sequence LTWQDLTVMV…FAQAGFPCPA (244 aa). Residue 87–94 coordinates ATP; it reads GPSGSGKS. One can recognise an ABC transmembrane type-2 domain in the interval 382 to 594; it reads LQTYTLTKRS…ALQGQYQNDL (213 aa). Asn394 carries an N-linked (GlcNAc...) asparagine glycan. Helical transmembrane passes span 406–426, 436–456, 485–505, 513–533, 540–560, and 628–648; these read LLIY…VGTS, CASF…PSFV, TPFL…MVGL, LFFV…MMAI, FLMG…VSGF, and INLS…FIMI. N-linked (GlcNAc...) asparagine glycans are attached at residues Asn671 and Asn675. Ser688 carries the phosphoserine modification.

This sequence belongs to the ABC transporter superfamily. ABCG family. Eye pigment precursor importer (TC 3.A.1.204) subfamily. Homodimer. Forms heterodimers with ABCG9, ABCG12 and ABCG14 in epidermal cells. In terms of tissue distribution, expressed in seedlings, roots, stems, leaves, flowers, and siliques, mostly in epidermis, trichomes, vasculatures and developing tissues. Follows an uniparental maternal expression in the seed, thus being the product of a maternally expressed imprinted gene. Accumulates in the phloem. Transcripts seem to be transported from shoots to roots.

Its subcellular location is the cell membrane. Required for the cuticle, root suberin and pollen coat development by controlling cutin and maybe wax transport to the extracellular matrix. Involved in developmental plasticity and stress responses. Together with ABCG9 and ABCG14, required for vascular development by regulating lipid/sterol homeostasis. May be a transporter of lignin precursors during tracheary element differentiation. The protein is ABC transporter G family member 11 of Arabidopsis thaliana (Mouse-ear cress).